A 2177-amino-acid polypeptide reads, in one-letter code: Brefeldin A-inhibited guanine nucleotide-exchange protein 3 (2177 aa).

Low complexity predominate over residues 282-295 (TSSTSTSLESDSAS). Positions 282 to 301 (TSSTSTSLESDSASPGVSDH) are disordered. Ser471 is subject to Phosphoserine. Residues 511 to 524 (TGQTTLEGELGQTT) show a composition bias toward polar residues. Disordered regions lie at residues 511–542 (TGQTTLEGELGQTTPEDHSGNHKNSLKSPAIP), 617–636 (AAEKDSGRSDVSDIGSDNCS), and 1031–1076 (DGAS…LSTA). The SEC7 domain maps to 583–796 (RTRSYGSRYS…EELYHQVLDR (214 aa)). Basic and acidic residues predominate over residues 618–627 (AEKDSGRSDV). Phosphoserine is present on residues Ser632 and Ser636. Polar residues predominate over residues 1032–1047 (GASQPPLTISQPQKAT). The residue at position 1049 (Ser1049) is a Phosphoserine. A helical transmembrane segment spans residues 1492–1512 (GPGFGIYAVVHLLLPVMSVWL). Disordered stretches follow at residues 1848-1877 (STDSSQQCSSEDEDIFEETAQVSPPRGKEK), 1946-2004 (ESST…RKKE), and 2033-2064 (KQQHNLSAFPKEVKVEKKGEPLGPRGQDSPLL). Over residues 1960-1974 (TPSEDDRSQSREHMG) the composition is skewed to basic and acidic residues. Phosphoserine is present on Ser1991. Composition is skewed to basic and acidic residues over residues 1993–2004 (KVEKKDPSRKKE) and 2043–2052 (KEVKVEKKGE). Phosphoserine is present on residues Ser2079, Ser2081, Ser2095, Ser2101, and Ser2103. Residues 2082-2103 (AGPELLRQDKRPRSGSTGSSLS) form a disordered region.

In terms of assembly, interacts with PHB2. In terms of tissue distribution, expressed in breast cancer cell lines. Not expressed in normal tissues such as duct, mammary gland, lung, heart, liver, kidnay, bone marrow.

The protein localises to the cytoplasm. It is found in the cytoplasmic vesicle. Its subcellular location is the secretory vesicle. The protein resides in the secretory vesicle membrane. Participates in the regulation of systemic glucose homeostasis, where it negatively regulates insulin granule biogenesis in pancreatic islet beta cells. Also regulates glucagon granule production in pancreatic alpha cells. Inhibits nuclear translocation of the transcriptional coregulator PHB2 and may enhance estrogen receptor alpha (ESR1) transcriptional activity in breast cancer cells. This Homo sapiens (Human) protein is Brefeldin A-inhibited guanine nucleotide-exchange protein 3.